Consider the following 247-residue polypeptide: E3 ubiquitin ligase TRIM40 (247 aa).

The RING-type zinc-finger motif lies at 12-55 (CPICLDPLKEAVSTDCRHLFCRMCLIRHMDKASVSGVLSCPVCR). The B box-type zinc finger occupies 64 to 105 (GDNYICHTHQKRVCRFCESSRHLLCEECLQSPEHRAHTELSI). Zn(2+)-binding residues include cysteine 69, histidine 72, cysteine 91, and histidine 97. Positions 111–148 (HYKERLNRRSRKLRKDLGDLQRLKAQEEKMLQALQVDW) form a coiled coil.

The protein belongs to the TRIM/RBCC family. In terms of assembly, interacts with NEDD8.

It catalyses the reaction S-ubiquitinyl-[E2 ubiquitin-conjugating enzyme]-L-cysteine + [acceptor protein]-L-lysine = [E2 ubiquitin-conjugating enzyme]-L-cysteine + N(6)-ubiquitinyl-[acceptor protein]-L-lysine.. E3 ubiquitin-protein ligase that plays a role in the limitation of the innate immune response. Mediates inhibition of the RLR signaling pathway by ubiquitinating RIGI and IFIH1 receptors, leading to their proteasomal degradation. Also promotes the neddylation of IKBKG/NEMO, stabilizing NFKBIA, and thereby inhibiting of NF-kappa-B nuclear translocation and activation. The polypeptide is E3 ubiquitin ligase TRIM40 (Trim40) (Rattus norvegicus (Rat)).